A 337-amino-acid polypeptide reads, in one-letter code: MSPSAPNTNELNSPVLETQPLAGDAALLHSSIAAGYEEIIRAPFDYLLNLPGKDVRSKMISAFNEWLCIPADKLEVIKRIVMLLHNASLLIDDIQDSSKLRRGLPVSHHIFGVPQTINAANYAYFLAQQELPKLGDPKAFEIYTEELLSLHRGQGMDIYWREASKCPTEEEYFSMVSHKTGGLFRLAIRLMQLASDKNWFVFHTRDFVPLVNVLGVIFQIRDDYLNLQSHAYTVNKGFGEDLTEGKYSFPIIHSIRSDPTNIQLSSILKQRTTDVDVKLFAVECIKATGSFEHCKEKIAELVAEARQLIKEMGNSVPGSAEAVDRVLDLIGLEPESS.

Isopentenyl diphosphate is bound by residues Lys53, Arg56, and His85. Residues Asp92 and Asp96 each coordinate Mg(2+). Arg101 provides a ligand contact to dimethylallyl diphosphate. Residue Arg102 coordinates isopentenyl diphosphate. Dimethylallyl diphosphate contacts are provided by Lys179, Thr180, and Gln219. Residue Asp222 participates in Mg(2+) binding. Dimethylallyl diphosphate is bound by residues Asn226, Lys236, and Lys246.

The protein belongs to the FPP/GGPP synthase family. The cofactor is Mg(2+).

The enzyme catalyses isopentenyl diphosphate + dimethylallyl diphosphate = (2E)-geranyl diphosphate + diphosphate. It catalyses the reaction isopentenyl diphosphate + (2E)-geranyl diphosphate = (2E,6E)-farnesyl diphosphate + diphosphate. The catalysed reaction is isopentenyl diphosphate + (2E,6E)-farnesyl diphosphate = (2E,6E,10E)-geranylgeranyl diphosphate + diphosphate. The protein operates within secondary metabolite biosynthesis; terpenoid biosynthesis. In terms of biological role, geranylgeranyl pyrophosphate synthase; part of the gene cluster that mediates the biosynthesis of the immunosuppressants subglutinols, meroterpenoids consisting of an alpha-pyrone (4-hydroxy-5,6-dimethyl-2-pyrone) moiety attached to a decalin core fused to a five-membered cyclic ether carrying a prenylside chain. The first step of the pathway is the synthesis of the alpha-pyrone moiety by the polyketide synthase subA via condensation of one acetyl-CoA starter unit with 3 malonyl-CoA units and 2 methylations. The alpha-pyrone is then combined with geranylgeranyl pyrophosphate (GGPP) formed by the GGPP synthase subD through the action of the prenyltransferase subC to yield a linear alpha-pyrone diterpenoid. Subsequent steps in the subglutinol biosynthetic pathway involve the decalin core formation, which is thought to be initiated by the epoxidation of the C10-C11 olefin by the FAD-dependent oxidoreductase subE. The following cyclization cascade would be catalyzed by the terpene cyclase subB. Lastly, the FAD-dependent dehydrogenase subF probably catalyzes the five-membered cyclic ether formation to complete the formation of subglutinol A. Subsequent redox reactions appear to give rise to subglutinol C and D, however, it remains unclear which enzymes are responsible for these transformations. SubD may have secondary function in the conversion of the identified subglutinols to subglutinol analog 45, which seems to be the major product of the cluster. The protein is Geranylgeranyl pyrophosphate synthase subD of Metarhizium robertsii (strain ARSEF 23 / ATCC MYA-3075) (Metarhizium anisopliae (strain ARSEF 23)).